The sequence spans 64 residues: Beta-defensin 13 (64 aa).

The N-terminal stretch at 1 to 22 is a signal peptide; it reads MRIFSLIVAGLVLLIQLYPAWG. 3 disulfide bridges follow: cysteine 30–cysteine 57, cysteine 37–cysteine 51, and cysteine 41–cysteine 58.

This sequence belongs to the beta-defensin family. In terms of tissue distribution, expressed in testis and to a lesser extent in epididymis (caput, corpus and cauda). Also weakly expressed in kidneys.

Its subcellular location is the secreted. In terms of biological role, has antibacterial activity. This Mus musculus (Mouse) protein is Beta-defensin 13 (Defb13).